A 598-amino-acid chain; its full sequence is DNA (cytosine-5)-methyltransferase DRM2 (598 aa).

Disordered stretches follow at residues 1–49 and 114–146; these read MVDW…NGKA and EVDE…GDED. Residues 42 to 91 enclose the UBA 1 domain; that stretch reads PQDANGKANGSGALVAEFMGMGFPKEMILKAIKEIGDTDTEQLLELLLTY. A compositionally biased stretch (acidic residues) spans 114–128; it reads EVDEEEDDTNWDEYD. The region spanning 150–194 is the UBA 2 domain; it reads EMSEKDEKMKSLVNMGFPEDEAKMAIDRCGLDAPVAVLVDSIYAS. A disordered region spans residues 227–252; it reads GSKKRKRYGSGPSGNQVPFDGSHEEP. The SAM-dependent MTase DRM-type domain maps to 272 to 598; that stretch reads VHRNLPDQAL…EHVKATMSAV (327 aa).

This sequence belongs to the class I-like SAM-binding methyltransferase superfamily. DRM-methyltransferase family. As to quaternary structure, interacts (via UBA domains) with EIF4A.

It is found in the nucleus. It carries out the reaction a 2'-deoxycytidine in DNA + S-adenosyl-L-methionine = a 5-methyl-2'-deoxycytidine in DNA + S-adenosyl-L-homocysteine + H(+). Involved in de novo DNA methylation. Required for CpG and non-CpG methylation. Required for normal establishment and maintenance of RNA-directed DNA methylation (RdDM) mediated by small interfering RNAs (siRNAs). Regulates proper plant development in both vegetative and reproductive stages through DNA methylation. The polypeptide is DNA (cytosine-5)-methyltransferase DRM2 (Oryza sativa subsp. japonica (Rice)).